We begin with the raw amino-acid sequence, 173 residues long: Inorganic pyrophosphatase (173 aa).

Substrate is bound by residues K29, R43, and Y55. Positions 65, 70, and 102 each coordinate Mg(2+). Position 141 (Y141) interacts with substrate.

The protein belongs to the PPase family. As to quaternary structure, homohexamer. Mg(2+) is required as a cofactor.

Its subcellular location is the cytoplasm. The enzyme catalyses diphosphate + H2O = 2 phosphate + H(+). Catalyzes the hydrolysis of inorganic pyrophosphate (PPi) forming two phosphate ions. The polypeptide is Inorganic pyrophosphatase (Rickettsia conorii (strain ATCC VR-613 / Malish 7)).